The sequence spans 500 residues: Glycerol kinase (500 aa).

Thr11 serves as a coordination point for ADP. Positions 11, 12, and 13 each coordinate ATP. Residue Thr11 coordinates sn-glycerol 3-phosphate. Residue Arg15 participates in ADP binding. Arg81, Glu82, Tyr133, and Asp242 together coordinate sn-glycerol 3-phosphate. The glycerol site is built by Arg81, Glu82, Tyr133, Asp242, and Gln243. ADP is bound by residues Thr264 and Gly307. Residues Thr264, Gly307, Gln311, and Gly411 each contribute to the ATP site. Residue Gly411 coordinates ADP.

Belongs to the FGGY kinase family.

The catalysed reaction is glycerol + ATP = sn-glycerol 3-phosphate + ADP + H(+). It participates in polyol metabolism; glycerol degradation via glycerol kinase pathway; sn-glycerol 3-phosphate from glycerol: step 1/1. With respect to regulation, inhibited by fructose 1,6-bisphosphate (FBP). Functionally, key enzyme in the regulation of glycerol uptake and metabolism. Catalyzes the phosphorylation of glycerol to yield sn-glycerol 3-phosphate. The sequence is that of Glycerol kinase from Bradyrhizobium sp. (strain BTAi1 / ATCC BAA-1182).